The chain runs to 139 residues: Ribonuclease P protein component (139 aa).

Belongs to the RnpA family. In terms of assembly, consists of a catalytic RNA component (M1 or rnpB) and a protein subunit.

The catalysed reaction is Endonucleolytic cleavage of RNA, removing 5'-extranucleotides from tRNA precursor.. Its function is as follows. RNaseP catalyzes the removal of the 5'-leader sequence from pre-tRNA to produce the mature 5'-terminus. It can also cleave other RNA substrates such as 4.5S RNA. The protein component plays an auxiliary but essential role in vivo by binding to the 5'-leader sequence and broadening the substrate specificity of the ribozyme. The sequence is that of Ribonuclease P protein component from Paraburkholderia xenovorans (strain LB400).